The chain runs to 153 residues: SsrA-binding protein (153 aa).

The tract at residues 129–153 is disordered; that stretch reads KREDMKKKDQSREMAQALREKSKSH.

The protein belongs to the SmpB family.

The protein localises to the cytoplasm. In terms of biological role, required for rescue of stalled ribosomes mediated by trans-translation. Binds to transfer-messenger RNA (tmRNA), required for stable association of tmRNA with ribosomes. tmRNA and SmpB together mimic tRNA shape, replacing the anticodon stem-loop with SmpB. tmRNA is encoded by the ssrA gene; the 2 termini fold to resemble tRNA(Ala) and it encodes a 'tag peptide', a short internal open reading frame. During trans-translation Ala-aminoacylated tmRNA acts like a tRNA, entering the A-site of stalled ribosomes, displacing the stalled mRNA. The ribosome then switches to translate the ORF on the tmRNA; the nascent peptide is terminated with the 'tag peptide' encoded by the tmRNA and targeted for degradation. The ribosome is freed to recommence translation, which seems to be the essential function of trans-translation. The chain is SsrA-binding protein from Geobacter sulfurreducens (strain ATCC 51573 / DSM 12127 / PCA).